The following is a 341-amino-acid chain: Protein-glutamate methylesterase/protein-glutamine glutaminase 2 (341 aa).

Residues 11-126 form the Response regulatory domain; the sequence is RVLVADDSEL…DLGEYGRLIR (116 aa). Aspartate 62 carries the 4-aspartylphosphate modification. One can recognise a CheB-type methylesterase domain in the interval 152 to 341; that stretch reads PARAARVEVV…IPRALRELTR (190 aa). Catalysis depends on residues serine 166, histidine 193, and aspartate 285.

Belongs to the CheB family. Post-translationally, phosphorylated by CheA. Phosphorylation of the N-terminal regulatory domain activates the methylesterase activity.

It is found in the cytoplasm. The catalysed reaction is [protein]-L-glutamate 5-O-methyl ester + H2O = L-glutamyl-[protein] + methanol + H(+). It catalyses the reaction L-glutaminyl-[protein] + H2O = L-glutamyl-[protein] + NH4(+). Functionally, involved in chemotaxis. Part of a chemotaxis signal transduction system that modulates chemotaxis in response to various stimuli. Catalyzes the demethylation of specific methylglutamate residues introduced into the chemoreceptors (methyl-accepting chemotaxis proteins or MCP) by CheR. Also mediates the irreversible deamidation of specific glutamine residues to glutamic acid. The polypeptide is Protein-glutamate methylesterase/protein-glutamine glutaminase 2 (Anaeromyxobacter dehalogenans (strain 2CP-C)).